Here is a 384-residue protein sequence, read N- to C-terminus: Erythronate-4-phosphate dehydrogenase (384 aa).

Substrate-binding residues include Ser-45 and Thr-66. 2 residues coordinate NAD(+): Asp-147 and Thr-177. The active site involves Arg-210. Asp-234 lines the NAD(+) pocket. The active site involves Glu-239. The active-site Proton donor is His-256. Residue Gly-259 participates in NAD(+) binding. Tyr-260 contacts substrate.

The protein belongs to the D-isomer specific 2-hydroxyacid dehydrogenase family. PdxB subfamily. As to quaternary structure, homodimer.

It localises to the cytoplasm. It carries out the reaction 4-phospho-D-erythronate + NAD(+) = (R)-3-hydroxy-2-oxo-4-phosphooxybutanoate + NADH + H(+). It participates in cofactor biosynthesis; pyridoxine 5'-phosphate biosynthesis; pyridoxine 5'-phosphate from D-erythrose 4-phosphate: step 2/5. Its function is as follows. Catalyzes the oxidation of erythronate-4-phosphate to 3-hydroxy-2-oxo-4-phosphonooxybutanoate. The protein is Erythronate-4-phosphate dehydrogenase of Marinobacter nauticus (strain ATCC 700491 / DSM 11845 / VT8) (Marinobacter aquaeolei).